The chain runs to 469 residues: MLCLCLYVPVHISERTEFEYFESESLPVQLKSLFKLSLFLPSQEFDSYRKWRKKVVKAGDKDLDGQLDFEEFVHYLRDHEKKLRLVFKSLDKKNDGHIDSQEIMQSLRDLGVHISEEQAEKILKSMDKNGTMTIDWNEWRDYHLLHPAENIPEIILYWKHSTIFDVGESMLVPDEFTAEEKNTGMWWRHLVAGGGAGAVSRTCTAPLDRLKVLMQVHATRSNSMGIAGGFTQMIREGGLRSLWRGNGINVLKIAPESAIKFMAYEQIKRLIGSNQETLGILERLVSGSLAGAIAQSSIYPMEVLKTRLALGRTGQYSGIADCAKHIFKKEGMTAFYKGYIPNMLGIIPYAGIDLAVYETLKNSWLQRFATDSADPGVFVLLACGTMSSTCGQLASYPLALVRTRMQAQASQEGSPQMTMSGLFRHIVRTEGAIGLYRGLAPNFMKVIPAVSISYVVYENLKITLGVQSR.

Residues 1–189 (MLCLCLYVPV…EKNTGMWWRH (189 aa)) lie on the Mitochondrial intermembrane side of the membrane. EF-hand domains lie at 47 to 80 (SYRKWRKKVVKAGDKDLDGQLDFEEFVHYLRDHE), 78 to 113 (DHEKKLRLVFKSLDKKNDGHIDSQEIMQSLRDLGVH), and 114 to 149 (ISEEQAEKILKSMDKNGTMTIDWNEWRDYHLLHPAE). 5 residues coordinate Ca(2+): D60, D62, D64, Q66, and E71. Solcar repeat units lie at residues 184–270 (GMWW…IKRL), 278–363 (LGIL…LKNS), and 375–463 (PGVF…LKIT). The helical transmembrane segment at 190–207 (LVAGGGAGAVSRTCTAPL) threads the bilayer. At 208 to 244 (DRLKVLMQVHATRSNSMGIAGGFTQMIREGGLRSLWR) the chain is on the mitochondrial matrix side. The chain crosses the membrane as a helical span at residues 245-264 (GNGINVLKIAPESAIKFMAY). The Mitochondrial intermembrane segment spans residues 265–287 (EQIKRLIGSNQETLGILERLVSG). A helical membrane pass occupies residues 288-301 (SLAGAIAQSSIYPM). Residues 302–337 (EVLKTRLALGRTGQYSGIADCAKHIFKKEGMTAFYK) lie on the Mitochondrial matrix side of the membrane. A helical membrane pass occupies residues 338-357 (GYIPNMLGIIPYAGIDLAVY). Residues 358–380 (ETLKNSWLQRFATDSADPGVFVL) are Mitochondrial intermembrane-facing. A helical membrane pass occupies residues 381–398 (LACGTMSSTCGQLASYPL). Over 399–437 (ALVRTRMQAQASQEGSPQMTMSGLFRHIVRTEGAIGLYR) the chain is Mitochondrial matrix. The helical transmembrane segment at 438-457 (GLAPNFMKVIPAVSISYVVY) threads the bilayer. Residues 458–469 (ENLKITLGVQSR) lie on the Mitochondrial intermembrane side of the membrane.

This sequence belongs to the mitochondrial carrier (TC 2.A.29) family.

The protein localises to the mitochondrion inner membrane. Its function is as follows. Calcium-dependent mitochondrial solute carrier. The chain is Calcium-binding mitochondrial carrier protein SCaMC-2-B (slc25a25b) from Danio rerio (Zebrafish).